We begin with the raw amino-acid sequence, 213 residues long: Cytokinin riboside 5'-monophosphate phosphoribohydrolase LOG1 (213 aa).

Substrate contacts are provided by residues E78, R96–K97, G113–E119, and T125.

The protein belongs to the LOG family. In terms of tissue distribution, expressed in roots and shoots. Detected in the vascular tissues of roots, cotyledons, leaves and pistils, in the shoot apical meristem and in immature flowers.

The protein localises to the cytoplasm. The protein resides in the nucleus. It catalyses the reaction N(6)-(dimethylallyl)adenosine 5'-phosphate + H2O = N(6)-dimethylallyladenine + D-ribose 5-phosphate. It carries out the reaction 9-ribosyl-trans-zeatin 5'-phosphate + H2O = trans-zeatin + D-ribose 5-phosphate. In terms of biological role, cytokinin-activating enzyme working in the direct activation pathway. Phosphoribohydrolase that converts inactive cytokinin nucleotides to the biologically active free-base forms. The polypeptide is Cytokinin riboside 5'-monophosphate phosphoribohydrolase LOG1 (LOG1) (Arabidopsis thaliana (Mouse-ear cress)).